Consider the following 270-residue polypeptide: Thymidylate synthase (270 aa).

Residues Arg28 and 133-134 each bind dUMP; that span reads RR. Cys153 functions as the Nucleophile in the catalytic mechanism. DUMP is bound by residues 173-176, Asn184, and 214-216; these read RSAD and HIY. Asp176 is a binding site for (6R)-5,10-methylene-5,6,7,8-tetrahydrofolate. A (6R)-5,10-methylene-5,6,7,8-tetrahydrofolate-binding site is contributed by Ala269.

This sequence belongs to the thymidylate synthase family. Bacterial-type ThyA subfamily. As to quaternary structure, homodimer.

It is found in the cytoplasm. The catalysed reaction is dUMP + (6R)-5,10-methylene-5,6,7,8-tetrahydrofolate = 7,8-dihydrofolate + dTMP. Its pathway is pyrimidine metabolism; dTTP biosynthesis. Its function is as follows. Catalyzes the reductive methylation of 2'-deoxyuridine-5'-monophosphate (dUMP) to 2'-deoxythymidine-5'-monophosphate (dTMP) while utilizing 5,10-methylenetetrahydrofolate (mTHF) as the methyl donor and reductant in the reaction, yielding dihydrofolate (DHF) as a by-product. This enzymatic reaction provides an intracellular de novo source of dTMP, an essential precursor for DNA biosynthesis. In Corynebacterium diphtheriae (strain ATCC 700971 / NCTC 13129 / Biotype gravis), this protein is Thymidylate synthase.